Consider the following 336-residue polypeptide: Dihydroorotate dehydrogenase (quinone) (336 aa).

Residues 62–66 (AGLDK) and T86 each bind FMN. K66 is a binding site for substrate. Substrate is bound at residue 111–115 (NRMGF). The FMN site is built by N139 and N172. N172 lines the substrate pocket. S175 (nucleophile) is an active-site residue. N177 serves as a coordination point for substrate. K217 and T245 together coordinate FMN. Substrate is bound at residue 246-247 (NT). Residues G268, G297, and 318 to 319 (YT) each bind FMN.

This sequence belongs to the dihydroorotate dehydrogenase family. Type 2 subfamily. Monomer. FMN is required as a cofactor.

It is found in the cell membrane. It catalyses the reaction (S)-dihydroorotate + a quinone = orotate + a quinol. It functions in the pathway pyrimidine metabolism; UMP biosynthesis via de novo pathway; orotate from (S)-dihydroorotate (quinone route): step 1/1. Its function is as follows. Catalyzes the conversion of dihydroorotate to orotate with quinone as electron acceptor. This is Dihydroorotate dehydrogenase (quinone) from Pseudoalteromonas translucida (strain TAC 125).